The chain runs to 275 residues: 4-hydroxy-tetrahydrodipicolinate reductase (275 aa).

Residue 12-17 (GAAGRM) coordinates NAD(+). Arginine 39 is a binding site for NADP(+). Residues 102–104 (GTT) and 126–129 (SGNM) each bind NAD(+). Residue histidine 160 is the Proton donor/acceptor of the active site. Histidine 161 is a (S)-2,3,4,5-tetrahydrodipicolinate binding site. Lysine 164 functions as the Proton donor in the catalytic mechanism. 170–171 (GT) provides a ligand contact to (S)-2,3,4,5-tetrahydrodipicolinate.

The protein belongs to the DapB family.

The protein resides in the cytoplasm. It carries out the reaction (S)-2,3,4,5-tetrahydrodipicolinate + NAD(+) + H2O = (2S,4S)-4-hydroxy-2,3,4,5-tetrahydrodipicolinate + NADH + H(+). It catalyses the reaction (S)-2,3,4,5-tetrahydrodipicolinate + NADP(+) + H2O = (2S,4S)-4-hydroxy-2,3,4,5-tetrahydrodipicolinate + NADPH + H(+). The protein operates within amino-acid biosynthesis; L-lysine biosynthesis via DAP pathway; (S)-tetrahydrodipicolinate from L-aspartate: step 4/4. Catalyzes the conversion of 4-hydroxy-tetrahydrodipicolinate (HTPA) to tetrahydrodipicolinate. The polypeptide is 4-hydroxy-tetrahydrodipicolinate reductase (Agrobacterium fabrum (strain C58 / ATCC 33970) (Agrobacterium tumefaciens (strain C58))).